The sequence spans 282 residues: 4-diphosphocytidyl-2-C-methyl-D-erythritol kinase (282 aa).

Residue Lys-12 is part of the active site. Residue 95 to 105 participates in ATP binding; the sequence is PMGGGIGGGSS. Asp-137 is a catalytic residue.

It belongs to the GHMP kinase family. IspE subfamily.

It catalyses the reaction 4-CDP-2-C-methyl-D-erythritol + ATP = 4-CDP-2-C-methyl-D-erythritol 2-phosphate + ADP + H(+). The protein operates within isoprenoid biosynthesis; isopentenyl diphosphate biosynthesis via DXP pathway; isopentenyl diphosphate from 1-deoxy-D-xylulose 5-phosphate: step 3/6. Functionally, catalyzes the phosphorylation of the position 2 hydroxy group of 4-diphosphocytidyl-2C-methyl-D-erythritol. In Pseudomonas aeruginosa (strain UCBPP-PA14), this protein is 4-diphosphocytidyl-2-C-methyl-D-erythritol kinase.